We begin with the raw amino-acid sequence, 349 residues long: Hydroxymethylglutaryl-CoA synthase (349 aa).

Residue Asp29 coordinates (3S)-3-hydroxy-3-methylglutaryl-CoA. The active-site Proton donor/acceptor is the Glu81. (3S)-3-hydroxy-3-methylglutaryl-CoA-binding residues include Cys113, Ser154, Thr202, and His235. Catalysis depends on Cys113, which acts as the Acyl-thioester intermediate. The Proton donor/acceptor role is filled by His235. Arg240 is a CoA binding site. (3S)-3-hydroxy-3-methylglutaryl-CoA is bound by residues Arg244, Asn267, and Ser297.

The protein belongs to the thiolase-like superfamily. Archaeal HMG-CoA synthase family. In terms of assembly, interacts with acetoacetyl-CoA thiolase that catalyzes the precedent step in the pathway and with a DUF35 protein. The acetoacetyl-CoA thiolase/HMG-CoA synthase complex channels the intermediate via a fused CoA-binding site, which allows for efficient coupling of the endergonic thiolase reaction with the exergonic HMGCS reaction.

It carries out the reaction acetoacetyl-CoA + acetyl-CoA + H2O = (3S)-3-hydroxy-3-methylglutaryl-CoA + CoA + H(+). The protein operates within metabolic intermediate biosynthesis; (R)-mevalonate biosynthesis; (R)-mevalonate from acetyl-CoA: step 2/3. Its function is as follows. Catalyzes the condensation of acetyl-CoA with acetoacetyl-CoA to form 3-hydroxy-3-methylglutaryl-CoA (HMG-CoA). Functions in the mevalonate (MVA) pathway leading to isopentenyl diphosphate (IPP), a key precursor for the biosynthesis of isoprenoid compounds that are building blocks of archaeal membrane lipids. The protein is Hydroxymethylglutaryl-CoA synthase of Pyrobaculum arsenaticum (strain DSM 13514 / JCM 11321 / PZ6).